Here is a 143-residue protein sequence, read N- to C-terminus: D-aminoacyl-tRNA deacylase (143 aa).

Residues 135–136 carry the Gly-cisPro motif, important for rejection of L-amino acids motif; the sequence is GP.

The protein belongs to the DTD family. In terms of assembly, homodimer.

It localises to the cytoplasm. The catalysed reaction is glycyl-tRNA(Ala) + H2O = tRNA(Ala) + glycine + H(+). The enzyme catalyses a D-aminoacyl-tRNA + H2O = a tRNA + a D-alpha-amino acid + H(+). An aminoacyl-tRNA editing enzyme that deacylates mischarged D-aminoacyl-tRNAs. Also deacylates mischarged glycyl-tRNA(Ala), protecting cells against glycine mischarging by AlaRS. Acts via tRNA-based rather than protein-based catalysis; rejects L-amino acids rather than detecting D-amino acids in the active site. By recycling D-aminoacyl-tRNA to D-amino acids and free tRNA molecules, this enzyme counteracts the toxicity associated with the formation of D-aminoacyl-tRNA entities in vivo and helps enforce protein L-homochirality. The protein is D-aminoacyl-tRNA deacylase of Nocardia farcinica (strain IFM 10152).